The sequence spans 546 residues: Probable protein kinase UbiB (546 aa).

A Protein kinase domain is found at 123–501; that stretch reads DFQEIPLASA…RTNHGQALFL (379 aa). ATP contacts are provided by residues 129–137 and lysine 152; that span reads LASASISQV. The active-site Proton acceptor is the aspartate 287. A run of 2 helical transmembrane segments spans residues 497–517 and 521–541; these read QALF…FLYI and YLKI…TIGW.

It belongs to the ABC1 family. UbiB subfamily.

It localises to the cell inner membrane. Its pathway is cofactor biosynthesis; ubiquinone biosynthesis [regulation]. Functionally, is probably a protein kinase regulator of UbiI activity which is involved in aerobic coenzyme Q (ubiquinone) biosynthesis. The chain is Probable protein kinase UbiB from Blochmanniella pennsylvanica (strain BPEN).